A 405-amino-acid chain; its full sequence is Protein PAG1 (405 aa).

Positions 1 to 50 (MVSLIILFRLTFAIANRVRTLMKVLVIVSFFVLTGSASADSGALSLSGAA) are cleaved as a signal peptide. N-linked (GlcNAc...) asparagine glycosylation is found at Asn55, Asn104, Asn256, and Asn351. A lipid anchor (GPI-anchor amidated alanine) is attached at Ala391. Positions 392-405 (DSLRRTLALLFLLF) are cleaved as a propeptide — removed in mature form.

The protein resides in the cell membrane. The chain is Protein PAG1 (PAG1) from Trypanosoma brucei brucei.